Here is a 276-residue protein sequence, read N- to C-terminus: Mitochondrial outer membrane protein porin 2 (276 aa).

S76 is subject to Phosphoserine. T236 bears the Phosphothreonine mark.

It belongs to the eukaryotic mitochondrial porin (TC 1.B.8.1) family. Expressed in root tips, steles, leaves, sepals, petals, stamen and pistils.

It is found in the mitochondrion outer membrane. Forms a channel through the mitochondrial outer membrane that allows diffusion of small hydrophilic molecules. The channel adopts an open conformation at low or zero membrane potential and a closed conformation at potentials above 30-40 mV. The open state has a weak anion selectivity whereas the closed state is cation-selective. Involved in plant growth and development at the vegetative and reproductive stages. Is important for leaf and pollen development and mitochondrial membrane potential steady state. May be involved in ABA-mediated early seedling development and disease resistance. This is Mitochondrial outer membrane protein porin 2 (VDAC2) from Arabidopsis thaliana (Mouse-ear cress).